The primary structure comprises 70 residues: Uteroglobin (70 aa).

It belongs to the secretoglobin family. As to quaternary structure, antiparallel homodimer; disulfide-linked. Interaction with LMBR1L is controversial. As to expression, club cells (nonciliated cells of the surface epithelium of the pulmonary airways).

The protein localises to the secreted. Binds phosphatidylcholine, phosphatidylinositol, polychlorinated biphenyls (PCB) and weakly progesterone, potent inhibitor of phospholipase A2. The polypeptide is Uteroglobin (SCGB1A1) (Macaca fuscata fuscata (Japanese macaque)).